We begin with the raw amino-acid sequence, 408 residues long: Ribulose bisphosphate carboxylase/oxygenase activase, chloroplastic (408 aa).

The N-terminal 32 residues, 1–32 (MQVTMKSSAVSGQRVGGARVATRSVRRAQLQV), are a transit peptide targeting the chloroplast. 138 to 145 (GGKGQGKT) lines the ATP pocket.

Belongs to the RuBisCO activase family. As to quaternary structure, monomer.

The protein resides in the plastid. It localises to the chloroplast stroma. Functionally, activation of RuBisCO (ribulose-1,5-bisphosphate carboxylase/oxygenase; EC 4.1.1.39) involves the ATP-dependent carboxylation of the epsilon-amino group of lysine leading to a carbamate structure. The chain is Ribulose bisphosphate carboxylase/oxygenase activase, chloroplastic from Chlamydomonas reinhardtii (Chlamydomonas smithii).